The primary structure comprises 412 residues: 43 kDa receptor-associated protein of the synapse (412 aa).

Residue Gly-2 is the site of N-myristoyl glycine attachment. TPR repeat units lie at residues 6 to 39, 83 to 116, 123 to 156, 163 to 196, 206 to 239, 246 to 279, and 286 to 319; these read TKQQIEKGLHLYQSNQTEKALQVWMRVLEKSADP, TEGYLNLARSNEKLCEFQKTISYCKTCLNMQGTT, GQVSLSMGNAFLGLSIFQKALECFEKALRYAHNN, CRVCCSLGNFYAQIKDYEKALFFPCKAAELVNDY, AMSQYHMAVAYRKLGRLADAMDCCEESMKIALQH, ALCLLCFADIHLSRRDVQTAFPRYDSAMSIMTEI, and IQVLLGVAKCWMIQKELDKALESIEKAQELAEGL. Tyr-196 carries the post-translational modification Phosphotyrosine. The RING-type zinc finger occupies 363 to 403; that stretch reads CGMCGESIGEKNNQLQALPCSHFFHLKCLQTNGTRGCPNCR.

The protein belongs to the RAPsyn family. In terms of tissue distribution, expressed in muscle fibers and in neurons.

It localises to the cell membrane. The protein localises to the postsynaptic cell membrane. It is found in the cytoplasm. Its subcellular location is the cytoskeleton. In terms of biological role, postsynaptic protein required for clustering of nicotinic acetylcholine receptors (nAChRs) at the neuromuscular junction. It may link the receptor to the underlying postsynaptic cytoskeleton, possibly by direct association with actin or spectrin. This is 43 kDa receptor-associated protein of the synapse (RAPSN) from Gallus gallus (Chicken).